Reading from the N-terminus, the 410-residue chain is DNA replication and repair protein RecF (410 aa).

Glycine 30–threonine 37 serves as a coordination point for ATP.

The protein belongs to the RecF family.

The protein resides in the cytoplasm. Functionally, the RecF protein is involved in DNA metabolism; it is required for DNA replication and normal SOS inducibility. RecF binds preferentially to single-stranded, linear DNA. It also seems to bind ATP. In Rhodococcus jostii (strain RHA1), this protein is DNA replication and repair protein RecF.